Here is a 366-residue protein sequence, read N- to C-terminus: tRNA(Met) cytidine acetate ligase (366 aa).

ATP-binding positions include 7–20 (IAEF…HQYL), glycine 96, asparagine 152, and arginine 175.

The protein belongs to the TmcAL family.

It localises to the cytoplasm. It carries out the reaction cytidine(34) in elongator tRNA(Met) + acetate + ATP = N(4)-acetylcytidine(34) in elongator tRNA(Met) + AMP + diphosphate. In terms of biological role, catalyzes the formation of N(4)-acetylcytidine (ac(4)C) at the wobble position of elongator tRNA(Met), using acetate and ATP as substrates. First activates an acetate ion to form acetyladenylate (Ac-AMP) and then transfers the acetyl group to tRNA to form ac(4)C34. This chain is tRNA(Met) cytidine acetate ligase, found in Streptococcus equi subsp. zooepidemicus (strain H70).